Reading from the N-terminus, the 513-residue chain is Activin receptor type-2A (513 aa).

The signal sequence occupies residues 1–19 (MGAATKLAFAVFLISCSSG). The Extracellular portion of the chain corresponds to 20–139 (AILGRSETQE…VTPKPPLFNT (120 aa)). 5 disulfides stabilise this stretch: Cys30-Cys60, Cys50-Cys78, Cys85-Cys104, Cys91-Cys103, and Cys105-Cys110. N-linked (GlcNAc...) asparagine glycosylation is found at Asn43 and Asn66. The helical transmembrane segment at 140-160 (LLYSLVPIMGIAVIVLFSFWM) threads the bilayer. The Cytoplasmic segment spans residues 161–513 (YRHHKLAYPP…VDFPPKESSL (353 aa)). The 294-residue stretch at 192–485 (LQLLEIKARG…EERIIQMQKL (294 aa)) folds into the Protein kinase domain. Residues 198 to 206 (KARGRFGCV) and Lys219 each bind ATP. Asp322 serves as the catalytic Proton acceptor.

This sequence belongs to the protein kinase superfamily. TKL Ser/Thr protein kinase family. TGFB receptor subfamily. Mg(2+) serves as cofactor. The cofactor is Mn(2+). As to expression, expressed in hen anterior pituitary during the ovulatory cycle and in the ovarian follicle.

Its subcellular location is the cell membrane. The enzyme catalyses L-threonyl-[receptor-protein] + ATP = O-phospho-L-threonyl-[receptor-protein] + ADP + H(+). It carries out the reaction L-seryl-[receptor-protein] + ATP = O-phospho-L-seryl-[receptor-protein] + ADP + H(+). Its function is as follows. On ligand binding, forms a receptor complex consisting of two type II and two type I transmembrane serine/threonine kinases. Type II receptors phosphorylate and activate type I receptors which autophosphorylate, then bind and activate SMAD transcriptional regulators. Receptor for activin A, activin B and inhibin A. May modulate neuropeptide expression in dorsal root ganglia (DRG) neurons and ovarian follicle development. This Gallus gallus (Chicken) protein is Activin receptor type-2A (ACVR2A).